The chain runs to 67 residues: Conotoxin Cp1.1 (67 aa).

Residues 1-26 (MMFRLTSVSCFLLVIACLNLFQVVLT) form the signal peptide. 4 disulfides stabilise this stretch: Cys29/Cys43, Cys36/Cys48, Cys42/Cys52, and Cys47/Cys56. At Tyr60 the chain carries Tyrosine amide. A propeptide spanning residues 64 to 67 (ATFQ) is cleaved from the precursor.

This sequence belongs to the conotoxin I2 superfamily. In terms of tissue distribution, expressed by the venom duct.

It localises to the secreted. In Conus capitaneus (Captain cone), this protein is Conotoxin Cp1.1.